A 566-amino-acid polypeptide reads, in one-letter code: Arginine--tRNA ligase (566 aa).

A 'HIGH' region motif is present at residues 121–131 (ANPNGPFHIGH).

It belongs to the class-I aminoacyl-tRNA synthetase family.

It localises to the cytoplasm. The catalysed reaction is tRNA(Arg) + L-arginine + ATP = L-arginyl-tRNA(Arg) + AMP + diphosphate. The chain is Arginine--tRNA ligase from Methanococcus maripaludis (strain C6 / ATCC BAA-1332).